The primary structure comprises 337 residues: Heat-inducible transcription repressor HrcA (337 aa).

It belongs to the HrcA family.

Negative regulator of class I heat shock genes (grpE-dnaK-dnaJ and groELS operons). Prevents heat-shock induction of these operons. The polypeptide is Heat-inducible transcription repressor HrcA (Polaromonas naphthalenivorans (strain CJ2)).